Reading from the N-terminus, the 647-residue chain is UvrABC system protein C (647 aa).

Positions 16-95 constitute a GIY-YIG domain; that stretch reads VEPGVYRFRD…IKEFDPRFNV (80 aa). Positions 208–243 constitute a UVR domain; sequence DRYARELEQQMNAAAENLDFERAARLRDDRSALKRA.

It belongs to the UvrC family. As to quaternary structure, interacts with UvrB in an incision complex.

It is found in the cytoplasm. Functionally, the UvrABC repair system catalyzes the recognition and processing of DNA lesions. UvrC both incises the 5' and 3' sides of the lesion. The N-terminal half is responsible for the 3' incision and the C-terminal half is responsible for the 5' incision. In Mycobacterium marinum (strain ATCC BAA-535 / M), this protein is UvrABC system protein C.